The chain runs to 425 residues: Glutamyl-tRNA reductase (425 aa).

Substrate-binding positions include 49-52 (TCNR), Ser-107, 112-114 (EPQ), and Gln-118. Catalysis depends on Cys-50, which acts as the Nucleophile. An NADP(+)-binding site is contributed by 187-192 (GAGETI).

Belongs to the glutamyl-tRNA reductase family. Homodimer.

It carries out the reaction (S)-4-amino-5-oxopentanoate + tRNA(Glu) + NADP(+) = L-glutamyl-tRNA(Glu) + NADPH + H(+). It functions in the pathway porphyrin-containing compound metabolism; protoporphyrin-IX biosynthesis; 5-aminolevulinate from L-glutamyl-tRNA(Glu): step 1/2. In terms of biological role, catalyzes the NADPH-dependent reduction of glutamyl-tRNA(Glu) to glutamate 1-semialdehyde (GSA). This is Glutamyl-tRNA reductase from Pseudomonas syringae pv. syringae (strain B728a).